We begin with the raw amino-acid sequence, 38 residues long: Glucagon-like peptide (38 aa).

This sequence belongs to the glucagon family.

It localises to the secreted. This is Glucagon-like peptide from Hydrolagus colliei (Spotted ratfish).